Consider the following 1805-residue polypeptide: Cytadherence high molecular weight protein 2 (1805 aa).

4 coiled-coil regions span residues 28–838 (EKNR…NNAF), 914–1591 (ELKI…LRTQ), 1632–1723 (DNTL…QHNT), and 1777–1804 (NITK…KAAS).

Component of the cytoskeleton-like structure which stabilizes the shape of the wall-less Mycoplasma. This cytoskeleton-like network of accessory proteins containing HMW proteins 1 to 5 allows the proper anchoring of cytadhesin proteins in the mycoplasmal membrane at the attachment organelle. This chain is Cytadherence high molecular weight protein 2 (hmw2), found in Mycoplasma genitalium (strain ATCC 33530 / DSM 19775 / NCTC 10195 / G37) (Mycoplasmoides genitalium).